Here is a 662-residue protein sequence, read N- to C-terminus: Probable dolichyl-phosphate-mannose--protein mannosyltransferase 7 (662 aa).

At Met1–His26 the chain is on the lumenal side. Residues Leu27–Trp47 form a helical membrane-spanning segment. Residues Lys48–Glu159 are Cytoplasmic-facing. A helical transmembrane segment spans residues Trp160–Thr180. Residues Thr181 to Gly195 are Lumenal-facing. The helical transmembrane segment at Leu196 to Val216 threads the bilayer. Residues Arg217–Lys235 are Cytoplasmic-facing. A helical membrane pass occupies residues Phe236 to Tyr256. Over Ser257–Thr482 the chain is Lumenal. An MIR 1 domain is found at Pro289–Pro344. Residue Asn347 is glycosylated (N-linked (GlcNAc...) asparagine). MIR domains are found at residues Leu359 to Ile418 and Asp432 to Val488. The chain crosses the membrane as a helical span at residues Phe483–Ile503. The Cytoplasmic portion of the chain corresponds to Gly504–Ser565. The chain crosses the membrane as a helical span at residues Pro566–Val586. Residues Gln587–Glu617 are Lumenal-facing. A helical transmembrane segment spans residues Cys618–Gly638. At Lys639 to Lys662 the chain is on the cytoplasmic side.

This sequence belongs to the glycosyltransferase 39 family.

It is found in the endoplasmic reticulum membrane. The catalysed reaction is a di-trans,poly-cis-dolichyl beta-D-mannosyl phosphate + L-seryl-[protein] = 3-O-(alpha-D-mannosyl)-L-seryl-[protein] + a di-trans,poly-cis-dolichyl phosphate + H(+). It catalyses the reaction a di-trans,poly-cis-dolichyl beta-D-mannosyl phosphate + L-threonyl-[protein] = 3-O-(alpha-D-mannosyl)-L-threonyl-[protein] + a di-trans,poly-cis-dolichyl phosphate + H(+). It functions in the pathway protein modification; protein glycosylation. Its function is as follows. Probable protein O-mannosyltransferase involved in O-glycosylation which is essential for cell wall rigidity. Transfers mannose from Dol-P-mannose to Ser or Thr residues on proteins. This Saccharomyces cerevisiae (strain ATCC 204508 / S288c) (Baker's yeast) protein is Probable dolichyl-phosphate-mannose--protein mannosyltransferase 7.